The sequence spans 163 residues: MPSFDIVSEITMHEVNNAVENANRILSTRYDFRGVEAVIELNEKNETIKLTTESDFQLEQLIEILIGACIKRNIDSTSLDIPTESEHHGKLYSKEVKLKQGIETETAKKITKLIKDSKLKVQTQIQGEQVRVTGKSRDDLQAAIQLVKGAELGQPFQFNNFRD.

The protein belongs to the YajQ family.

In terms of biological role, nucleotide-binding protein. This Mannheimia succiniciproducens (strain KCTC 0769BP / MBEL55E) protein is Nucleotide-binding protein MS1759.